The following is a 195-amino-acid chain: MPKLGMREIRRAQLIDATLHTIDQTGLAGATLASVAQRASISTGIVSHYFGDKDGLLEATMRHVLRDLWQATSRRRRAAKADPRSKLRAVVAANFDAEQTSGPVMKTWLAFWSESMHKPPLRRLQYVNTRRLNSNLCADFSKAMPRAAARRAASGLAALIDGLWLRGALSGEPFDTKAALRVANDYIDLVLASRE.

The region spanning 8-68 is the HTH tetR-type domain; the sequence is EIRRAQLIDA…ATMRHVLRDL (61 aa). Positions 31–50 form a DNA-binding region, H-T-H motif; it reads TLASVAQRASISTGIVSHYF.

It participates in amine and polyamine biosynthesis; betaine biosynthesis via choline pathway [regulation]. Repressor involved in the biosynthesis of the osmoprotectant glycine betaine. It represses transcription of the choline transporter BetT and the genes of BetAB involved in the synthesis of glycine betaine. In Paraburkholderia phytofirmans (strain DSM 17436 / LMG 22146 / PsJN) (Burkholderia phytofirmans), this protein is HTH-type transcriptional regulator BetI.